The chain runs to 764 residues: Thyrotropin receptor (764 aa).

Positions 1–20 (MRPADLLQLVLLLDLPRDLG) are cleaved as a signal peptide. The Extracellular segment spans residues 21-413 (GMGCSSPPCE…EFNPCEDIMG (393 aa)). Residues Cys-31 and Cys-41 are joined by a disulfide bond. Residues Asn-77, Asn-99, and Asn-113 are each glycosylated (N-linked (GlcNAc...) asparagine). 7 LRR repeats span residues 100 to 124 (LSKV…ALKE), 125 to 150 (LPLL…VYST), 152 to 174 (IFFI…AFQG), 176 to 199 (CNET…AFNG), 200 to 223 (TKLD…AFGG), 227 to 248 (GPSL…GLEH), and 250 to 271 (KELI…SFLH). 2 N-linked (GlcNAc...) asparagine glycosylation sites follow: Asn-177 and Asn-198. Asn-302 carries an N-linked (GlcNAc...) asparagine glycan. Tyr-385 is subject to Sulfotyrosine. Residues 414-441 (YKFLRIVVWFVSLLALLGNVFVLLILLT) traverse the membrane as a helical segment. Topologically, residues 442-450 (SHYKLNVPR) are cytoplasmic. A helical membrane pass occupies residues 451–473 (FLMCNLAFADFCMGMYLLLIASV). The Extracellular segment spans residues 474-494 (DLYTHSEYYNHAIDWQTGPGC). The cysteines at positions 494 and 569 are disulfide-linked. Residues 495-517 (NTAGFFTVFASELSVYTLTVITL) form a helical membrane-spanning segment. At 518 to 537 (ERWYAITFAMRLDRKIRLRH) the chain is on the cytoplasmic side. The helical transmembrane segment at 538-560 (ACAIMVGGWVCCFLLALLPLVGI) threads the bilayer. Topologically, residues 561–580 (SSYAKVSICLPMDTETPLAL) are extracellular. A helical membrane pass occupies residues 581 to 602 (AYIVFVLTLNIVAFVIVCCCYV). Over 603–625 (KIYITVRNPQYNPGDKDTKIAKR) the chain is Cytoplasmic. A helical transmembrane segment spans residues 626-649 (MAVLIFTDFICMAPISFYALSAIL). Residues 650–660 (NKPLITVSNSK) are Extracellular-facing. Residues 661–682 (ILLVLFYPLNSCANPFLYAIFT) form a helical membrane-spanning segment. The Cytoplasmic segment spans residues 683–764 (KAFQRDVFIL…ISEEYMQTVL (82 aa)). A PDZ-binding motif is present at residues 762-764 (TVL).

It belongs to the G-protein coupled receptor 1 family. FSH/LSH/TSH subfamily. As to quaternary structure, interacts with heterodimer GPHA2:GPHB5; this interaction stimulates cAMP production. Interacts (via the PDZ-binding motif) with SCRIB; regulates TSHR trafficking and function. In terms of processing, glycosylated. Post-translationally, sulfated. Sulfation on Tyr-385 plays a role in thyrotropin receptor binding and activation. In terms of tissue distribution, expressed in thyroide cells (at protein level). Expressed in the thyroid.

Its subcellular location is the cell membrane. The protein localises to the basolateral cell membrane. In terms of biological role, receptor for the thyroid-stimulating hormone (TSH) or thyrotropin. Also acts as a receptor for the heterodimeric glycoprotein hormone (GPHA2:GPHB5) or thyrostimulin. The activity of this receptor is mediated by G proteins which activate adenylate cyclase. Plays a central role in controlling thyroid cell metabolism. The polypeptide is Thyrotropin receptor (TSHR) (Homo sapiens (Human)).